The chain runs to 1060 residues: Centrosomal protein of 131 kDa (1060 aa).

The span at 1 to 11 shows a compositional bias: polar residues; it reads MKGSRTITATP. Positions 1–96 are disordered; the sequence is MKGSRTITAT…TGSPRPAEPT (96 aa). Residues 1–244 are interaction with PLK4; that stretch reads MKGSRTITAT…SQSARGTTGL (244 aa). Ser14 and Ser35 each carry phosphoserine. 2 stretches are compositionally biased toward polar residues: residues 32-50 and 73-88; these read RPGS…SVAT and LRRS…SWTG. Ser47 carries the post-translational modification Phosphoserine; by MAPKAPK2. Position 78 is a phosphoserine; by MAPKAPK2 and PLK4 (Ser78). 5 positions are modified to phosphoserine: Ser89, Ser105, Ser114, Ser146, and Ser150. Disordered stretches follow at residues 136–155 and 217–248; these read LALP…LGPR and EGGE…LRRR. Positions 217-226 are enriched in basic and acidic residues; that stretch reads EGGEGSDLGK. The IQ domain occupies 263-283; sequence NQAAVTIQRWYRCQVQRRRAG. 2 stretches are compositionally biased toward basic and acidic residues: residues 314–327 and 344–363; these read EEAA…EKAR and KASE…RAPE. Positions 314–437 are disordered; the sequence is EEAARKKARE…VSGSSRGKAR (124 aa). The span at 398 to 408 shows a compositional bias: low complexity; sequence ASESSPEQWQS. A compositionally biased stretch (basic and acidic residues) spans 409–424; it reads PEDKPQDIHSQGEARQ. Thr473 carries the post-translational modification Phosphothreonine. A Phosphoserine modification is found at Ser481.

It belongs to the CEP131 family. In terms of assembly, self-associates. Associates with the centriolar satellite BBSome protein complex Interacts with BBS4; the interaction limits BBS4 availability for association with the BBSome complex, and hence negatively regulates ciliary localization of the BBSome complex. Interacts with MIB1. Interacts with PCM1; the interaction increases in response to ultraviolet light (UV) radiation. Associates with microtubule; association to microtubule is reduced in response to cellular stress, such as UV stimulation, in a process that requires p38 MAP kinase signaling. Interacts with CEP290, DCTN1, MAP1LC3B, PCNT, PCM1 and CEP152. Interacts with 14-3-3 proteins following UV-induced phosphorylation by MAPKAPK2; this inhibits formation of novel centriolar satellites. Interacts with SDCCAG8. Interacts with CCDC61. Interacts with PLK4. Ubiquitinated. Undergoes monoubiquitination catalyzed by the E3 ubiquitin-protein ligase MIB1 in proliferating cells, preventing cilia formation. Monoubiquitination by MIB1 is inhibited in response to cellular stress, such as ultraviolet light (UV) radiation or heat shock, resulting in ciliogenesis restoration. In terms of processing, MAPKAPK2-dependent phosphorylation at Ser-47 and Ser-78 occurs in response to cellular stress such as exposure to ultraviolet irradiation and promotes binding to 14-3-3 proteins which leads to cytoplasmic sequestration of CEP131 and blocks formation of new centriolar satellites. Phosphorylation at Ser-78 mediated by PLK4 is essential for proper organization and integrity of centriolar satellites but is dispensable for its localization to centrioles and its function in ciliogenesis. As to expression, localized to the pre-acrosome region of round and elongated spermatids in testis but also present in ovary, brain and adipose tissue.

Its subcellular location is the cytoplasm. It localises to the cytoskeleton. The protein resides in the microtubule organizing center. The protein localises to the centrosome. It is found in the centriolar satellite. Its subcellular location is the centriole. It localises to the cilium basal body. The protein resides in the cytoplasmic vesicle. The protein localises to the secretory vesicle. It is found in the acrosome. In terms of biological role, component of centriolar satellites contributing to the building of a complex and dynamic network required to regulate cilia/flagellum formation. In proliferating cells, MIB1-mediated ubiquitination induces its sequestration within centriolar satellites, precluding untimely cilia formation initiation. In contrast, during normal and ultraviolet or heat shock cellular stress-induced ciliogenesis, its non-ubiquitinated form is rapidly displaced from centriolar satellites and recruited to centrosome/basal bodies in a microtubule- and p38 MAPK-dependent manner. Also acts as a negative regulator of BBSome ciliary trafficking. Plays a role in sperm flagellar formation; may be involved in the regulation of intraflagellar transport (IFT) and/or intramanchette (IMT) trafficking, which are important for axoneme extension and/or cargo delivery to the nascent sperm tail. Required for optimal cell proliferation and cell cycle progression; may play a role in the regulation of genome stability and centriole duplication in non-ciliogenic cells. Involved in centriole duplication. Required for CEP152, WDR62 and CEP63 centrosomal localization and promotes the centrosomal localization of CDK2. Essential for maintaining proper centriolar satellite integrity. The sequence is that of Centrosomal protein of 131 kDa (Cep131) from Mus musculus (Mouse).